Reading from the N-terminus, the 354-residue chain is GTPase Obg (354 aa).

The Obg domain occupies 1 to 159 (MKFVDEVKIH…RDLVLELKLL (159 aa)). Residues 160 to 333 (ADVGIVGYPN…LLDAVGRALF (174 aa)) enclose the OBG-type G domain. Residues 166-173 (GYPNAGKS), 191-195 (FTTLT), 212-215 (DIPG), 283-286 (TKID), and 314-316 (SAV) each bind GTP. Positions 173 and 193 each coordinate Mg(2+).

Belongs to the TRAFAC class OBG-HflX-like GTPase superfamily. OBG GTPase family. As to quaternary structure, monomer. Requires Mg(2+) as cofactor.

The protein resides in the cytoplasm. Its function is as follows. An essential GTPase which binds GTP, GDP and possibly (p)ppGpp with moderate affinity, with high nucleotide exchange rates and a fairly low GTP hydrolysis rate. Plays a role in control of the cell cycle, stress response, ribosome biogenesis and in those bacteria that undergo differentiation, in morphogenesis control. The sequence is that of GTPase Obg from Anaeromyxobacter sp. (strain K).